We begin with the raw amino-acid sequence, 331 residues long: Ferredoxin--NADP reductase (331 aa).

FAD-binding residues include glutamate 34, glutamine 42, tyrosine 47, valine 87, phenylalanine 120, aspartate 285, and threonine 325.

This sequence belongs to the ferredoxin--NADP reductase type 2 family. In terms of assembly, homodimer. FAD serves as cofactor.

It catalyses the reaction 2 reduced [2Fe-2S]-[ferredoxin] + NADP(+) + H(+) = 2 oxidized [2Fe-2S]-[ferredoxin] + NADPH. In Levilactobacillus brevis (strain ATCC 367 / BCRC 12310 / CIP 105137 / JCM 1170 / LMG 11437 / NCIMB 947 / NCTC 947) (Lactobacillus brevis), this protein is Ferredoxin--NADP reductase.